The following is a 257-amino-acid chain: Small ribosomal subunit protein uS15m (257 aa).

A mitochondrion-targeting transit peptide spans 1-57; sequence MLRVAWRTLSLIRTRAVTQVLVPGLPGGGSAKFPFNQWGLQPRSLLLQAARGYVVRK. The tract at residues 225 to 257 is disordered; it reads RALKAAAAAQKQAKRRNPDSPAKAIPKTLKDSQ.

The protein belongs to the universal ribosomal protein uS15 family. Component of the mitochondrial small ribosomal subunit (mt-SSU). Mature mammalian 55S mitochondrial ribosomes consist of a small (28S) and a large (39S) subunit. The 28S small subunit contains a 12S ribosomal RNA (12S mt-rRNA) and 30 different proteins. The 39S large subunit contains a 16S rRNA (16S mt-rRNA), a copy of mitochondrial valine transfer RNA (mt-tRNA(Val)), which plays an integral structural role, and 52 different proteins. Interacts with METTL17.

Its subcellular location is the mitochondrion matrix. The sequence is that of Small ribosomal subunit protein uS15m (MRPS15) from Homo sapiens (Human).